Consider the following 121-residue polypeptide: UPF0344 protein BCG9842_B4136 (121 aa).

A run of 4 helical transmembrane segments spans residues I6 to G26, L38 to A58, W65 to V85, and P92 to L112.

The protein belongs to the UPF0344 family.

The protein localises to the cell membrane. In Bacillus cereus (strain G9842), this protein is UPF0344 protein BCG9842_B4136.